Here is a 72-residue protein sequence, read N- to C-terminus: Conotoxin Vc6.16 (72 aa).

An N-terminal signal peptide occupies residues 1–19 (MQKLIILLLVAAVLMSTQA). A propeptide spanning residues 20 to 44 (LFQEKRPKEKIDLLSKRKTDAEKQQ) is cleaved from the precursor. 3 cysteine pairs are disulfide-bonded: Cys-48/Cys-62, Cys-55/Cys-66, and Cys-61/Cys-71.

Belongs to the conotoxin O2 superfamily. As to expression, expressed by the venom duct.

Its subcellular location is the secreted. Its function is as follows. Inhibits voltage-gated ion channels. In Conus victoriae (Queen Victoria cone), this protein is Conotoxin Vc6.16.